A 273-amino-acid polypeptide reads, in one-letter code: Thymidylate synthase (273 aa).

Arg-31 lines the dUMP pocket. Position 61 (His-61) interacts with (6R)-5,10-methylene-5,6,7,8-tetrahydrofolate. 136–137 is a binding site for dUMP; the sequence is RR. Cys-156 serves as the catalytic Nucleophile. Residues 176 to 179, Asn-187, and 217 to 219 each bind dUMP; these read RSAD and HIY. Asp-179 provides a ligand contact to (6R)-5,10-methylene-5,6,7,8-tetrahydrofolate. Ala-272 lines the (6R)-5,10-methylene-5,6,7,8-tetrahydrofolate pocket.

Belongs to the thymidylate synthase family. Bacterial-type ThyA subfamily. Homodimer.

Its subcellular location is the cytoplasm. It catalyses the reaction dUMP + (6R)-5,10-methylene-5,6,7,8-tetrahydrofolate = 7,8-dihydrofolate + dTMP. Its pathway is pyrimidine metabolism; dTTP biosynthesis. Catalyzes the reductive methylation of 2'-deoxyuridine-5'-monophosphate (dUMP) to 2'-deoxythymidine-5'-monophosphate (dTMP) while utilizing 5,10-methylenetetrahydrofolate (mTHF) as the methyl donor and reductant in the reaction, yielding dihydrofolate (DHF) as a by-product. This enzymatic reaction provides an intracellular de novo source of dTMP, an essential precursor for DNA biosynthesis. This is Thymidylate synthase from Corynebacterium jeikeium (strain K411).